A 116-amino-acid chain; its full sequence is Putative iron-sulfur cluster insertion protein ErpA (116 aa).

Residues cysteine 44, cysteine 108, and cysteine 110 each contribute to the iron-sulfur cluster site.

This sequence belongs to the HesB/IscA family. In terms of assembly, homodimer. It depends on iron-sulfur cluster as a cofactor.

Required for insertion of 4Fe-4S clusters. The sequence is that of Putative iron-sulfur cluster insertion protein ErpA from Thiobacillus denitrificans (strain ATCC 25259 / T1).